We begin with the raw amino-acid sequence, 638 residues long: Chaperone protein DnaK (638 aa).

Thr-197 carries the post-translational modification Phosphothreonine; by autocatalysis. The segment at 598–638 (QQSAPSGAAAGPDEGAPSGSGGTSGTRGGDDVIDAEFTETK) is disordered. The span at 615–624 (SGSGGTSGTR) shows a compositional bias: gly residues. Acidic residues predominate over residues 628 to 638 (DVIDAEFTETK).

It belongs to the heat shock protein 70 family.

In terms of biological role, acts as a chaperone. This chain is Chaperone protein DnaK, found in Gloeobacter violaceus (strain ATCC 29082 / PCC 7421).